Consider the following 450-residue polypeptide: Guanine deaminase (450 aa).

Zn(2+) is bound by residues histidine 88 and histidine 90. Substrate contacts are provided by residues 90–93 (HAPQ), 218–219 (RF), 245–248 (HLSE), and aspartate 335. Zn(2+) is bound by residues histidine 245 and aspartate 335.

It belongs to the metallo-dependent hydrolases superfamily. ATZ/TRZ family. Zn(2+) is required as a cofactor.

The catalysed reaction is guanine + H2O + H(+) = xanthine + NH4(+). Its pathway is purine metabolism; guanine degradation; xanthine from guanine: step 1/1. Functionally, catalyzes the hydrolytic deamination of guanine, producing xanthine and ammonia. The protein is Guanine deaminase (guaD) of Dictyostelium discoideum (Social amoeba).